A 334-amino-acid polypeptide reads, in one-letter code: Beta-glucanase (334 aa).

The N-terminal stretch at 1–27 (MKNRVISLLMASLLLVLSVIVAPFYKA) is a signal peptide. A GH16 domain is found at 28–248 (EAATVVNTPF…YVKYYPNGVP (221 aa)). The active-site Nucleophile is the glutamate 136. The active-site Proton donor is the glutamate 140. The 68-residue stretch at 267–334 (NLPLKGDVNG…RYLIRAIPSL (68 aa)) folds into the Dockerin domain.

Belongs to the glycosyl hydrolase 16 family. May form part of a multienzyme complex (cellulosome).

The enzyme catalyses Hydrolysis of (1-&gt;4)-beta-D-glucosidic linkages in beta-D-glucans containing (1-&gt;3)- and (1-&gt;4)-bonds.. The sequence is that of Beta-glucanase (licB) from Acetivibrio thermocellus (strain ATCC 27405 / DSM 1237 / JCM 9322 / NBRC 103400 / NCIMB 10682 / NRRL B-4536 / VPI 7372) (Clostridium thermocellum).